Here is a 203-residue protein sequence, read N- to C-terminus: Holliday junction branch migration complex subunit RuvA (203 aa).

The segment at 1–63 (MIFSVRGEVL…EDSMTLYGFS (63 aa)) is domain I. The tract at residues 64–141 (DAENRDLFLA…GPVGASGLTV (78 aa)) is domain II. The segment at 141 to 145 (VGTAA) is flexible linker. Residues 146-203 (DGNAVRGSVVEALVGLGFAAKQAEEATDQVLDGELGKDGAVATSSALRAALSLLGKTR) are domain III.

This sequence belongs to the RuvA family. In terms of assembly, homotetramer. Forms an RuvA(8)-RuvB(12)-Holliday junction (HJ) complex. HJ DNA is sandwiched between 2 RuvA tetramers; dsDNA enters through RuvA and exits via RuvB. An RuvB hexamer assembles on each DNA strand where it exits the tetramer. Each RuvB hexamer is contacted by two RuvA subunits (via domain III) on 2 adjacent RuvB subunits; this complex drives branch migration. In the full resolvosome a probable DNA-RuvA(4)-RuvB(12)-RuvC(2) complex forms which resolves the HJ.

It localises to the cytoplasm. In terms of biological role, the RuvA-RuvB-RuvC complex processes Holliday junction (HJ) DNA during genetic recombination and DNA repair, while the RuvA-RuvB complex plays an important role in the rescue of blocked DNA replication forks via replication fork reversal (RFR). RuvA specifically binds to HJ cruciform DNA, conferring on it an open structure. The RuvB hexamer acts as an ATP-dependent pump, pulling dsDNA into and through the RuvAB complex. HJ branch migration allows RuvC to scan DNA until it finds its consensus sequence, where it cleaves and resolves the cruciform DNA. This is Holliday junction branch migration complex subunit RuvA from Mycobacterium leprae (strain Br4923).